The following is a 180-amino-acid chain: CASP-like protein XL3 (180 aa).

Topologically, residues 1-7 (MELSIQK) are cytoplasmic. A helical transmembrane segment spans residues 8-28 (IEALIRLSTIVMLVLTACLIG). The Extracellular portion of the chain corresponds to 29-49 (LDSQTKVIFYVQKKASFKDLR). A helical membrane pass occupies residues 50 to 70 (ALVGLLYITSLAAAYNLLQLC). Residues 71–98 (CSSFSASYKGTSLQSYAYLAWLRYILDQ) are Cytoplasmic-facing. The chain crosses the membrane as a helical span at residues 99–119 (AVVYAVFAGNLAALEHSFLVL). Over 120-140 (TGEENFQWLKWCNKYTRFCTQ) the chain is Extracellular. Residues 141–161 (IGGSLLCGFVASLLMFSIASI) form a helical membrane-spanning segment. Residues 162–180 (SAFNLFRQYSPTKFMHLKL) are Cytoplasmic-facing.

This sequence belongs to the Casparian strip membrane proteins (CASP) family. As to quaternary structure, homodimer and heterodimers.

It localises to the cell membrane. The chain is CASP-like protein XL3 (XL3) from Gossypium hirsutum (Upland cotton).